The chain runs to 289 residues: Thioredoxin-like protein 1 (289 aa).

The Thioredoxin domain maps to Val-2–Asn-109. A disulfide bridge links Cys-34 with Cys-37. Ser-113 is modified (phosphoserine). The PITH domain occupies Glu-115–Lys-285.

Component of the 19S regulatory cap of the 26S proteasome. Interacts with PSMD14/RPN11. Interacts with, and reduces EEF1A1. Ubiquitous.

The protein resides in the cytoplasm. It is found in the nucleus. Functionally, active thioredoxin with a redox potential of about -250 mV. This is Thioredoxin-like protein 1 (TXNL1) from Homo sapiens (Human).